The sequence spans 571 residues: La-related protein 7 (571 aa).

Met-1 is subject to N-acetylmethionine. Positions 1-17 (METENQKTMEESTEKRK) are enriched in basic and acidic residues. Disordered regions lie at residues 1 to 25 (METENQKTMEESTEKRKEEKKKRSR) and 181 to 366 (LNNP…ERHK). Residues 23-117 (RSRVKQVLAD…KPLGERPKDE (95 aa)) form the HTH La-type RNA-binding domain. An RRM domain is found at 120–198 (RTVYVELLPK…PRKPGIFPKT (79 aa)). Basic residues predominate over residues 214–223 (KKKKKKKGRI). Residue Lys-232 forms a Glycyl lysine isopeptide (Lys-Gly) (interchain with G-Cter in SUMO2) linkage. The residue at position 252 (Thr-252) is a Phosphothreonine. Phosphoserine is present on residues Ser-254 and Ser-257. The residue at position 261 (Thr-261) is a Phosphothreonine. The span at 287-296 (KAGKRERSSA) shows a compositional bias: basic and acidic residues. Ser-294, Ser-295, and Ser-335 each carry phosphoserine. Phosphothreonine is present on Thr-336. The span at 342–351 (PGDRKGDSLS) shows a compositional bias: basic and acidic residues. Ser-349 bears the Phosphoserine mark. Basic residues predominate over residues 352 to 365 (KGKRKHKKKHKERH). Lys-408 participates in a covalent cross-link: Glycyl lysine isopeptide (Lys-Gly) (interchain with G-Cter in SUMO2). The tract at residues 411 to 432 (SEMETESKAPPGSGQQCSTQEK) is disordered. The span at 423–432 (SGQQCSTQEK) shows a compositional bias: polar residues. Residues 439 to 552 (QFVTGVIVKI…TEKLITKAEK (114 aa)) form the xRRM domain.

Belongs to the LARP7 family. Core component of the 7SK RNP complex, at least composed of 7SK RNA, LARP7, MEPCE, HEXIM1 (or HEXIM2) and P-TEFb (composed of CDK9 and CCNT1/cyclin-T1). Interacts with METTL16. Interacts with RBM7; upon genotoxic stress this interaction is enhanced, triggering the release of inactive P-TEFb complex from the core, yielding to P-TEFb complex activation. Associates with box C/D small nucleolar ribonucleoprotein (snoRNP) complexes.

It is found in the nucleus. The protein localises to the nucleoplasm. Functionally, RNA-binding protein that specifically binds distinct small nuclear RNA (snRNAs) and regulates their processing and function. Specifically binds the 7SK snRNA (7SK RNA) and acts as a core component of the 7SK ribonucleoprotein (RNP) complex, thereby acting as a negative regulator of transcription elongation by RNA polymerase II. The 7SK RNP complex sequesters the positive transcription elongation factor b (P-TEFb) in a large inactive 7SK RNP complex preventing RNA polymerase II phosphorylation and subsequent transcriptional elongation. The 7SK RNP complex also promotes snRNA gene transcription by RNA polymerase II via interaction with the little elongation complex (LEC). LARP7 specifically binds to the highly conserved 3'-terminal U-rich stretch of 7SK RNA; on stimulation, remains associated with 7SK RNA, whereas P-TEFb is released from the complex. LARP7 also acts as a regulator of mRNA splicing fidelity by promoting U6 snRNA processing. Specifically binds U6 snRNAs and associates with a subset of box C/D RNP complexes: promotes U6 snRNA 2'-O-methylation by facilitating U6 snRNA loading into box C/D RNP complexes. U6 snRNA 2'-O-methylation is required for mRNA splicing fidelity. Binds U6 snRNAs with a 5'-CAGGG-3' sequence motif. U6 snRNA processing is required for spermatogenesis. The chain is La-related protein 7 from Rattus norvegicus (Rat).